The sequence spans 436 residues: Voltage-gated potassium channel regulatory subunit KCNG3 (436 aa).

The Cytoplasmic segment spans residues 1–168 (MTFGRSGAAS…RTFEEPTSSL (168 aa)). Residues 169–190 (AAQILASVSVVFVIVSMVVLCA) form a helical membrane-spanning segment. Topologically, residues 191–220 (STLPDWRNAAADNRSLDDRSRYSAGPGREP) are extracellular. The helical transmembrane segment at 221–242 (SGIIEAICIGWFTAECIVRFIV) threads the bilayer. At 243–253 (SKNKCEFVKRP) the chain is on the cytoplasmic side. The helical transmembrane segment at 254 to 274 (LNIIDLLAITPYYISVLMTVF) threads the bilayer. Topologically, residues 275–284 (TGENSQLQRA) are extracellular. A helical; Voltage-sensor transmembrane segment spans residues 285–305 (GVTLRVLRMMRIFWVIKLARH). The Cytoplasmic segment spans residues 306-320 (FIGLQTLGLTLKRCY). The helical transmembrane segment at 321-342 (REMVMLLVFICVAMAIFSALSQ) threads the bilayer. At 343–360 (LLEHGLDLETSNKDFTSI) the chain is on the extracellular side. Residues 361 to 372 (PAACWWVIISMT) constitute an intramembrane region (helical). Residues 373-378 (TVGYGD) carry the Selectivity filter motif. Residues 373–380 (TVGYGDMY) lie within the membrane without spanning it. Topologically, residues 381-387 (PITVPGR) are extracellular. The helical transmembrane segment at 388–416 (ILGGVCVVSGIVLLALPITFIYHSFVQCY) threads the bilayer. At 417 to 436 (HELKFRSARYSRSLSTEFLN) the chain is on the cytoplasmic side.

This sequence belongs to the potassium channel family. G (TC 1.A.1.2) subfamily. Kv6.3/KCNG3 sub-subfamily. Heterotetramer with KCNB1. Does not form homomultimers. In terms of tissue distribution, expressed in the brain, liver, testis, small intestine, colon, thymus and adrenal gland.

It localises to the cell membrane. The protein resides in the cytoplasm. Its function is as follows. Regulatory subunit of the voltage-gated potassium (Kv) channel which, when coassembled with KCNB1, modulates the kinetics parameters of the heterotetrameric channel namely the inactivation and deactivation rate. Potassium channel subunit that does not form functional channels by itself. Reduces the deactivation rate. Moderately accelerates activation. In Homo sapiens (Human), this protein is Voltage-gated potassium channel regulatory subunit KCNG3.